A 236-amino-acid polypeptide reads, in one-letter code: Sugar fermentation stimulation protein homolog (236 aa).

It belongs to the SfsA family.

The sequence is that of Sugar fermentation stimulation protein homolog from Pseudomonas fluorescens (strain SBW25).